The chain runs to 203 residues: Dual specificity phosphatase 29 (203 aa).

The region spanning His-47–Glu-193 is the Tyrosine-protein phosphatase domain. His-137 to Arg-144 lines the substrate pocket. Cys-138 acts as the Phosphocysteine intermediate in catalysis.

The protein belongs to the protein-tyrosine phosphatase family. Non-receptor class dual specificity subfamily.

Its subcellular location is the cytoplasm. The protein resides in the nucleus. It catalyses the reaction O-phospho-L-tyrosyl-[protein] + H2O = L-tyrosyl-[protein] + phosphate. The catalysed reaction is O-phospho-L-seryl-[protein] + H2O = L-seryl-[protein] + phosphate. The enzyme catalyses O-phospho-L-threonyl-[protein] + H2O = L-threonyl-[protein] + phosphate. Functionally, dual specificity phosphatase able to dephosphorylate phosphotyrosine, phosphoserine and phosphothreonine residues within the same substrate, with a preference for phosphotyrosine as a substrate. Involved in the modulation of AMPK and MAPK1/2 signaling pathways. The sequence is that of Dual specificity phosphatase 29 (dusp29) from Oryzias latipes (Japanese rice fish).